A 150-amino-acid polypeptide reads, in one-letter code: UPF0756 membrane protein HAPS_1649 (150 aa).

Transmembrane regions (helical) follow at residues Met-1–Phe-21, Val-27–Val-46, Tyr-52–Gly-72, Leu-82–Gly-102, and Ile-123–Leu-143.

Belongs to the UPF0756 family.

The protein localises to the cell membrane. The polypeptide is UPF0756 membrane protein HAPS_1649 (Glaesserella parasuis serovar 5 (strain SH0165) (Haemophilus parasuis)).